The sequence spans 189 residues: Apolipoprotein D (189 aa).

The first 20 residues, 1-20 (MVPVLLLLPALAGLFGAAEG), serve as a signal peptide directing secretion. Residue Gln21 is modified to Pyrrolidone carboxylic acid. Intrachain disulfides connect Cys28–Cys134 and Cys61–Cys185. N-linked (GlcNAc...) asparagine glycosylation is found at Asn65 and Asn98.

Belongs to the calycin superfamily. Lipocalin family. In terms of assembly, homodimer.

The protein resides in the secreted. Functionally, APOD occurs in the macromolecular complex with lecithin-transport and binding of bilin. Appears to be able to transport a variety of ligands in a number of different contexts. The chain is Apolipoprotein D (APOD) from Bos taurus (Bovine).